The primary structure comprises 811 residues: Elongation factor G, mitochondrial (811 aa).

The N-terminal 64 residues, 1–64 (MSAIARAAAR…FQQSFQRRWA (64 aa)), are a transit peptide targeting the mitochondrion. Residues 96 to 394 (RRQRNVGISA…GVCAYLPNPS (299 aa)) form the tr-type G domain. Residues 105–112 (AHIDSGKT), 192–196 (DTPGH), and 246–249 (NKMD) each bind GTP.

This sequence belongs to the TRAFAC class translation factor GTPase superfamily. Classic translation factor GTPase family. EF-G/EF-2 subfamily.

It is found in the mitochondrion. Its pathway is protein biosynthesis; polypeptide chain elongation. Mitochondrial GTPase that catalyzes the GTP-dependent ribosomal translocation step during translation elongation. During this step, the ribosome changes from the pre-translocational (PRE) to the post-translocational (POST) state as the newly formed A-site-bound peptidyl-tRNA and P-site-bound deacylated tRNA move to the P and E sites, respectively. Catalyzes the coordinated movement of the two tRNA molecules, the mRNA and conformational changes in the ribosome. This chain is Elongation factor G, mitochondrial, found in Cryptococcus neoformans var. neoformans serotype D (strain JEC21 / ATCC MYA-565) (Filobasidiella neoformans).